The sequence spans 1124 residues: ATP-dependent DNA helicase mph1 (1124 aa).

2 disordered regions span residues 1–103 (MFTL…EARS) and 123–302 (QLTQ…PTQH). Acidic residues-rich tracts occupy residues 7 to 17 (DSSDYFDDDLG) and 169 to 178 (RDDEYDDDEE). A compositionally biased stretch (polar residues) spans 210–222 (TPIIGQQSTTIEA). The segment covering 226–236 (LLDDIPDDAFD) has biased composition (acidic residues). Residues 255–271 (SFTQSTNRPLGVRQTTL) are compositionally biased toward polar residues. The Helicase ATP-binding domain maps to 328-496 (IAQKGLFHNL…AVIDGLDISR (169 aa)). 341–348 (LPTGLGKT) contacts ATP. The short motif at 444-447 (DEAH) is the DEAH box element. In terms of domain architecture, Helicase C-terminal spans 666–840 (YLKQVVLNHF…GTRFTFHDDM (175 aa)). The span at 855–873 (KRAIDIPEENTVRDLPEPK) shows a compositional bias: basic and acidic residues. Disordered regions lie at residues 855-923 (KRAI…TPEP) and 1016-1124 (MPKA…DSDD). Basic residues-rich tracts occupy residues 874–886 (RRGRAPKRPPKKF) and 906–916 (SKRRVPNKSKA).

The protein belongs to the DEAD box helicase family. DEAH subfamily. FANCM sub-subfamily. As to quaternary structure, interacts with the MHF histone-fold complex to form the FANCM-MHF complex.

Its subcellular location is the nucleus. It catalyses the reaction ATP + H2O = ADP + phosphate + H(+). Its function is as follows. ATP-dependent DNA helicase involved in DNA damage repair by homologous recombination and in genome maintenance. Capable of unwinding D-loops. Plays a role in limiting crossover recombinants during mitotic DNA double-strand break (DSB) repair. Component of a FANCM-MHF complex which promotes gene conversion at blocked replication forks, probably by reversal of the stalled fork. The polypeptide is ATP-dependent DNA helicase mph1 (Aspergillus niger (strain ATCC MYA-4892 / CBS 513.88 / FGSC A1513)).